The chain runs to 204 residues: RNA-free ribonuclease P (204 aa).

It belongs to the HARP family.

It carries out the reaction Endonucleolytic cleavage of RNA, removing 5'-extranucleotides from tRNA precursor.. RNA-free RNase P that catalyzes the removal of the 5'-leader sequence from pre-tRNA to produce the mature 5'-terminus. In Pyrococcus abyssi (strain GE5 / Orsay), this protein is RNA-free ribonuclease P.